The primary structure comprises 59 residues: Large ribosomal subunit protein bL32B (59 aa).

This sequence belongs to the bacterial ribosomal protein bL32 family.

This Enterococcus faecalis (strain ATCC 700802 / V583) protein is Large ribosomal subunit protein bL32B (rpmF2).